The primary structure comprises 68 residues: Protein transport protein Sec61 subunit gamma (68 aa).

Over 1–32 the chain is Cytoplasmic; that stretch reads MDQVMQFVEPSRQFVKDSIRLVKRCTKPDRKE. Residues 33–61 traverse the membrane as a helical segment; the sequence is FQKIAMATAIGFAIMGFIGFFVKLIHIPI. Residues 62 to 68 lie on the Extracellular side of the membrane; sequence NNIIVGS.

Belongs to the SecE/SEC61-gamma family. As to quaternary structure, the SEC61 channel-forming translocon complex consists of channel-forming core components SEC61A1, SEC61B and SEC61G and different auxiliary components such as SEC62 and SEC63. The SEC61 channel associates with the multi-pass translocon (MPT) complex.

The protein localises to the endoplasmic reticulum membrane. Its function is as follows. Component of SEC61 channel-forming translocon complex that mediates transport of signal peptide-containing precursor polypeptides across the endoplasmic reticulum (ER). Forms a ribosome receptor and a gated pore in the ER membrane, both functions required for cotranslational translocation of nascent polypeptides. The SEC61 channel is also involved in ER membrane insertion of transmembrane proteins: it mediates membrane insertion of the first few transmembrane segments of proteins, while insertion of subsequent transmembrane regions of multi-pass membrane proteins is mediated by the multi-pass translocon (MPT) complex. This is Protein transport protein Sec61 subunit gamma (sec61g) from Xenopus laevis (African clawed frog).